A 159-amino-acid polypeptide reads, in one-letter code: Protein Smg homolog (159 aa).

This sequence belongs to the Smg family.

This is Protein Smg homolog from Dichelobacter nodosus (strain VCS1703A).